Reading from the N-terminus, the 249-residue chain is MRRPIIAGNWKMHNTTEEARDLVTLLRPLVGTARAEVVVCPPFTAIAATVNAASGSNISVGAQDLFWEDKGAYTGEVSGPMLRDLGCRYVIIGHSERRQYFGETDATVNKKLLAAYRNELLPIVCVGETLAEREAGHTLEVVGRQVREGLKGLETGQARDLVVAYEPVWAIGTGKTATAADAQEVIAFIRKTLGEMYGETAAAIRIQYGGSVKPENIAELMAQPDIDGALVGGASLDAVSFAAIVNYDQ.

9-11 lines the substrate pocket; it reads NWK. His94 functions as the Electrophile in the catalytic mechanism. Glu166 acts as the Proton acceptor in catalysis. Substrate contacts are provided by residues Gly172, Ser211, and 232 to 233; that span reads GG.

It belongs to the triosephosphate isomerase family. As to quaternary structure, homodimer.

It localises to the cytoplasm. It catalyses the reaction D-glyceraldehyde 3-phosphate = dihydroxyacetone phosphate. It participates in carbohydrate biosynthesis; gluconeogenesis. It functions in the pathway carbohydrate degradation; glycolysis; D-glyceraldehyde 3-phosphate from glycerone phosphate: step 1/1. Functionally, involved in the gluconeogenesis. Catalyzes stereospecifically the conversion of dihydroxyacetone phosphate (DHAP) to D-glyceraldehyde-3-phosphate (G3P). This chain is Triosephosphate isomerase, found in Moorella thermoacetica (strain ATCC 39073 / JCM 9320).